Here is a 359-residue protein sequence, read N- to C-terminus: GTP 3',8-cyclase 1 (359 aa).

A Radical SAM core domain is found at 21–241; sequence RCRRMMGDLR…SLEKRYGRIE (221 aa). GTP is bound at residue Arg30. Positions 37 and 41 each coordinate [4Fe-4S] cluster. Tyr43 contributes to the S-adenosyl-L-methionine binding site. Residue Cys44 participates in [4Fe-4S] cluster binding. Position 80 (Arg80) interacts with GTP. Gly84 contacts S-adenosyl-L-methionine. Thr115 serves as a coordination point for GTP. Residue Ser139 coordinates S-adenosyl-L-methionine. Lys176 is a GTP binding site. Met210 is a binding site for S-adenosyl-L-methionine. [4Fe-4S] cluster-binding residues include Cys273 and Cys276. Residue 278-280 participates in GTP binding; that stretch reads RSR. Residue Cys290 participates in [4Fe-4S] cluster binding.

This sequence belongs to the radical SAM superfamily. MoaA family. In terms of assembly, monomer and homodimer. It depends on [4Fe-4S] cluster as a cofactor.

The enzyme catalyses GTP + AH2 + S-adenosyl-L-methionine = (8S)-3',8-cyclo-7,8-dihydroguanosine 5'-triphosphate + 5'-deoxyadenosine + L-methionine + A + H(+). Its pathway is cofactor biosynthesis; molybdopterin biosynthesis. Its function is as follows. Catalyzes the cyclization of GTP to (8S)-3',8-cyclo-7,8-dihydroguanosine 5'-triphosphate. This is GTP 3',8-cyclase 1 from Mycobacterium tuberculosis (strain CDC 1551 / Oshkosh).